The following is a 436-amino-acid chain: Eukaryotic translation initiation factor 5 (436 aa).

Position 27 to 34 (27 to 34 (GKGNGIKT)) interacts with GTP. The tract at residues 177–203 (NSDKGSSNDDDDDDWEPEPVEPNGMLS) is disordered. Residues 184–195 (NDDDDDDWEPEP) are compositionally biased toward acidic residues. The W2 domain maps to 216–379 (EKSEEQRLDM…KEAEEETEEE (164 aa)). A compositionally biased stretch (basic and acidic residues) spans 396–408 (LRQQKEKAAREAQ). The disordered stretch occupies residues 396–436 (LRQQKEKAAREAQQKSAKATNGNAAAASGANDEEDLDIDDI). The span at 409–425 (QKSAKATNGNAAAASGA) shows a compositional bias: low complexity. The segment covering 426-436 (NDEEDLDIDDI) has biased composition (acidic residues).

The protein belongs to the eIF-2-beta/eIF-5 family.

In terms of biological role, catalyzes the hydrolysis of GTP bound to the 40S ribosomal initiation complex (40S.mRNA.Met-tRNA[F].eIF-2.GTP) with the subsequent joining of a 60S ribosomal subunit resulting in the release of eIF-2 and the guanine nucleotide. The subsequent joining of a 60S ribosomal subunit results in the formation of a functional 80S initiation complex (80S.mRNA.Met-tRNA[F]). This chain is Eukaryotic translation initiation factor 5, found in Caenorhabditis elegans.